We begin with the raw amino-acid sequence, 581 residues long: Oligo-1,6-glucosidase IMA5 (581 aa).

Asp210 functions as the Nucleophile in the catalytic mechanism. The active-site Proton donor is Glu272.

This sequence belongs to the glycosyl hydrolase 13 family.

The enzyme catalyses Hydrolysis of (1-&gt;6)-alpha-D-glucosidic linkages in some oligosaccharides produced from starch and glycogen by alpha-amylase, and in isomaltose.. In terms of biological role, alpha-glucosidase with specificity for isomaltose, maltose, and palatinose. This is Oligo-1,6-glucosidase IMA5 (IMA5) from Saccharomyces cerevisiae (strain ATCC 204508 / S288c) (Baker's yeast).